We begin with the raw amino-acid sequence, 335 residues long: Protein BIG1 (335 aa).

Residues 1-17 (MQTVLKYLLLIMCGSFC) form the signal peptide. Topologically, residues 20 to 275 (EELQNQTNVP…FDSQLIENNR (256 aa)) are lumenal. N-linked (GlcNAc...) asparagine glycans are attached at residues asparagine 24 and asparagine 144. Residues 276–296 (GLLQLIFTILVGYILIQFFFT) traverse the membrane as a helical segment. Residues 297-335 (KKTIVDEKITNKKDNVKQTSPQLLKKVQEIQKKPSQQVS) lie on the Cytoplasmic side of the membrane.

The protein belongs to the BIG1 family. In terms of processing, N-glycosylated.

Its subcellular location is the endoplasmic reticulum membrane. Functionally, required for normal beta-1,6-glucan synthesis. In Saccharomyces cerevisiae (strain ATCC 204508 / S288c) (Baker's yeast), this protein is Protein BIG1 (BIG1).